A 133-amino-acid chain; its full sequence is Fatty acid-binding protein homolog 1 (133 aa).

Position 1 is an N-acetylmethionine (methionine 1). Hexadecanoate contacts are provided by residues arginine 107 and 127–129 (RTY).

The protein belongs to the calycin superfamily. Fatty-acid binding protein (FABP) family.

Its function is as follows. Has been implicated in the acquisition, storage, and transport of lipids, and may be important to the organism since it is incapable of synthesizing most of its lipids de novo. The sequence is that of Fatty acid-binding protein homolog 1 (FABP1) from Echinococcus granulosus (Hydatid tapeworm).